Consider the following 271-residue polypeptide: Transmembrane protein 33 homolog (271 aa).

Residues 1–32 (MVEIVEEPDDHQSSSTGAGSSGSSSAPPPPPP) are disordered. The span at 13 to 25 (SSSTGAGSSGSSS) shows a compositional bias: low complexity. The next 3 helical transmembrane spans lie at 56–76 (VLTV…VPAH), 125–145 (VVFL…IYAA), and 180–200 (ALGI…SLIF).

Belongs to the PER33/POM33 family.

It localises to the membrane. The polypeptide is Transmembrane protein 33 homolog (Caenorhabditis elegans).